Consider the following 512-residue polypeptide: GMP synthase [glutamine-hydrolyzing] (512 aa).

The region spanning 7-197 (TIIVLDFGSQ…VFGVCGCSEG (191 aa)) is the Glutamine amidotransferase type-1 domain. C84 (nucleophile) is an active-site residue. Catalysis depends on residues H171 and E173. The 190-residue stretch at 198-387 (WNMENFIEVE…LGIPDEIVWR (190 aa)) folds into the GMPS ATP-PPase domain. 225-231 (SGGVDSS) is a binding site for ATP.

In terms of assembly, homodimer.

The catalysed reaction is XMP + L-glutamine + ATP + H2O = GMP + L-glutamate + AMP + diphosphate + 2 H(+). It participates in purine metabolism; GMP biosynthesis; GMP from XMP (L-Gln route): step 1/1. Catalyzes the synthesis of GMP from XMP. The chain is GMP synthase [glutamine-hydrolyzing] from Bacillus cereus (strain ATCC 10987 / NRS 248).